Consider the following 381-residue polypeptide: Queuine tRNA-ribosyltransferase (381 aa).

The active-site Proton acceptor is the D103. Residues 103–107 (DSGGF), D157, Q200, and G227 contribute to the substrate site. The RNA binding stretch occupies residues 258–264 (GVGTYRE). Residue D277 is the Nucleophile of the active site. The tract at residues 282–286 (TRLAR) is RNA binding; important for wobble base 34 recognition. Zn(2+)-binding residues include C315, C317, C320, and H346.

This sequence belongs to the queuine tRNA-ribosyltransferase family. In terms of assembly, homodimer. Within each dimer, one monomer is responsible for RNA recognition and catalysis, while the other monomer binds to the replacement base PreQ1. Zn(2+) is required as a cofactor.

It carries out the reaction 7-aminomethyl-7-carbaguanine + guanosine(34) in tRNA = 7-aminomethyl-7-carbaguanosine(34) in tRNA + guanine. Its pathway is tRNA modification; tRNA-queuosine biosynthesis. Its function is as follows. Catalyzes the base-exchange of a guanine (G) residue with the queuine precursor 7-aminomethyl-7-deazaguanine (PreQ1) at position 34 (anticodon wobble position) in tRNAs with GU(N) anticodons (tRNA-Asp, -Asn, -His and -Tyr). Catalysis occurs through a double-displacement mechanism. The nucleophile active site attacks the C1' of nucleotide 34 to detach the guanine base from the RNA, forming a covalent enzyme-RNA intermediate. The proton acceptor active site deprotonates the incoming PreQ1, allowing a nucleophilic attack on the C1' of the ribose to form the product. After dissociation, two additional enzymatic reactions on the tRNA convert PreQ1 to queuine (Q), resulting in the hypermodified nucleoside queuosine (7-(((4,5-cis-dihydroxy-2-cyclopenten-1-yl)amino)methyl)-7-deazaguanosine). This chain is Queuine tRNA-ribosyltransferase, found in Cyanothece sp. (strain PCC 7425 / ATCC 29141).